A 207-amino-acid polypeptide reads, in one-letter code: Urease accessory protein UreG (207 aa).

14 to 21 (GPVGSGKT) contacts GTP.

The protein belongs to the SIMIBI class G3E GTPase family. UreG subfamily. As to quaternary structure, homodimer. UreD, UreF and UreG form a complex that acts as a GTP-hydrolysis-dependent molecular chaperone, activating the urease apoprotein by helping to assemble the nickel containing metallocenter of UreC. The UreE protein probably delivers the nickel.

It is found in the cytoplasm. Its function is as follows. Facilitates the functional incorporation of the urease nickel metallocenter. This process requires GTP hydrolysis, probably effectuated by UreG. The sequence is that of Urease accessory protein UreG from Chelativorans sp. (strain BNC1).